A 228-amino-acid polypeptide reads, in one-letter code: Prolactin (228 aa).

The signal sequence occupies residues 1-29; that stretch reads MGTKRSSLKGSLLLLLLMSSLFLFKSVES. Cysteines 33 and 40 form a disulfide. S55, S63, and S119 each carry phosphoserine. Disulfide bonds link C87–C203 and C220–C228.

Belongs to the somatotropin/prolactin family. In terms of assembly, interacts with PRLR.

It is found in the secreted. Functionally, prolactin acts primarily on the mammary gland by promoting lactation, mammogenesis, mitogenesis and osmoregulation. In Trichosurus vulpecula (Brush-tailed possum), this protein is Prolactin (PRL).